The sequence spans 351 residues: O-methyltransferase apf6 (351 aa).

S-adenosyl-L-methionine contacts are provided by residues 231 to 232 (GG), 279 to 280 (NF), and Arg295. The active-site Proton acceptor is the His299.

Belongs to the class I-like SAM-binding methyltransferase superfamily. Cation-independent O-methyltransferase family.

The protein operates within secondary metabolite biosynthesis. O-methyltransferase; part of the gene cluster that mediates the biosynthesis of the cyclic tetrapeptide apicidin F (APF). The non-ribosomal peptide synthetase apf1 incorporates four different amino acids to produce apicidin F: L-phenylalanine, D-pipecolic acid (D-pip), N-methoxy-L-tryptophan and L-2-aminooctanedioic acid. L-Phenylalanine is the only proteinogenic amino acid directly used by apf1. The 3 other apf1 substrates are non-proteinogenic and have to be modified by other enzymes of the cluster. Lysine is converted to delta-1-pyrroline-5-carboxylate (P5C) which is reduced to L-pipecolic acid (L-pip) by apf3. L-pip is epimerized to D-pip, probably by apf1 activity, prior to incorporation. L-Tryptophan is N-oxidyzed by one of the cytochrome P450 monooxygenases (apf7 or apf8), and further methylated at the hydroxy group by the O-methyltransferase apf6 to yield N-methoxy-L-tryptophan. The synthesis of the fourth apf1 substrate is more complex. The fatty acid synthase apf5 is involved in the synthesis of the octanoic acid backbone of L-2-aminooctanedioic acid by fixing one acetyl-CoA unit and three malonyl-CoA units. Then one of the cytochrome P450 monooxygenases (apf7 or apf8) may oxidize this backbone to 2-oxooctanoic acid. The aminotransferase apf4 is predicted to catalyze the exchange of the keto group with an amino group. The next step would be the oxidation of 2-aminooctanoic acid by one of the cytochrome P450 monooxygenases (apf7 or apf8). The last step is the oxidation of 2-amino-8-hydroxyoctanoic acid to 2-aminooctanedioic acid is catalyzed by the FAD-dependent monooxygenase apf9. This chain is O-methyltransferase apf6, found in Gibberella fujikuroi (strain CBS 195.34 / IMI 58289 / NRRL A-6831) (Bakanae and foot rot disease fungus).